The following is a 79-amino-acid chain: Translational regulator CsrA (79 aa).

The protein belongs to the CsrA/RsmA family. Homodimer; the beta-strands of each monomer intercalate to form a hydrophobic core, while the alpha-helices form wings that extend away from the core.

It is found in the cytoplasm. Functionally, a translational regulator that binds mRNA to regulate translation initiation and/or mRNA stability. Usually binds in the 5'-UTR at or near the Shine-Dalgarno sequence preventing ribosome-binding, thus repressing translation. Its main target seems to be the major flagellin gene, while its function is anatagonized by FliW. In Geobacter sulfurreducens (strain ATCC 51573 / DSM 12127 / PCA), this protein is Translational regulator CsrA.